Reading from the N-terminus, the 189-residue chain is Putative manganese efflux pump MntP (189 aa).

The next 6 membrane-spanning stretches (helical) occupy residues 3–23 (LSAT…ASIG), 41–61 (LIFG…GLFA), 65–85 (ILEW…CRMI), 104–124 (FWVL…IGVG), 132–152 (IVHT…LGML), and 165–185 (AEII…YEHI).

Belongs to the MntP (TC 9.B.29) family.

The protein localises to the cell inner membrane. Its function is as follows. Probably functions as a manganese efflux pump. This is Putative manganese efflux pump MntP from Yersinia enterocolitica serotype O:8 / biotype 1B (strain NCTC 13174 / 8081).